The chain runs to 321 residues: Malate dehydrogenase (321 aa).

NAD(+)-binding positions include 10 to 15 (GAGQIG) and Asp34. Substrate contacts are provided by Arg83 and Arg89. NAD(+)-binding positions include Asn96 and 119–121 (VTN). The substrate site is built by Asn121 and Arg152. His176 serves as the catalytic Proton acceptor.

The protein belongs to the LDH/MDH superfamily. MDH type 3 family.

It carries out the reaction (S)-malate + NAD(+) = oxaloacetate + NADH + H(+). In terms of biological role, catalyzes the reversible oxidation of malate to oxaloacetate. This chain is Malate dehydrogenase, found in Azorhizobium caulinodans (strain ATCC 43989 / DSM 5975 / JCM 20966 / LMG 6465 / NBRC 14845 / NCIMB 13405 / ORS 571).